The sequence spans 958 residues: Coiled-coil domain-containing protein 33 (958 aa).

A C2 domain is found at Ser-214–Ala-353. Residues Ser-602 to Pro-617 show a composition bias toward polar residues. Residues Ser-602–Glu-628 form a disordered region. Coiled coils occupy residues Asp-632–Arg-774 and Phe-859–Glu-899. The tract at residues Glu-899–Thr-958 is disordered. Polar residues-rich tracts occupy residues Pro-907–Thr-920 and Gln-949–Thr-958.

In Homo sapiens (Human), this protein is Coiled-coil domain-containing protein 33 (CCDC33).